We begin with the raw amino-acid sequence, 239 residues long: Purine nucleoside phosphorylase DeoD-type (239 aa).

His5 is a binding site for a purine D-ribonucleoside. Gly21 and Arg25 together coordinate phosphate. Lys27 is modified (N6-acetyllysine). Residues Arg44 and 88-91 (RVGS) contribute to the phosphate site. Residues 180–182 (EME) and 204–205 (SD) each bind a purine D-ribonucleoside. Asp205 functions as the Proton donor in the catalytic mechanism.

Belongs to the PNP/UDP phosphorylase family. In terms of assembly, homohexamer; trimer of homodimers.

It carries out the reaction a purine D-ribonucleoside + phosphate = a purine nucleobase + alpha-D-ribose 1-phosphate. It catalyses the reaction a purine 2'-deoxy-D-ribonucleoside + phosphate = a purine nucleobase + 2-deoxy-alpha-D-ribose 1-phosphate. In terms of biological role, catalyzes the reversible phosphorolytic breakdown of the N-glycosidic bond in the beta-(deoxy)ribonucleoside molecules, with the formation of the corresponding free purine bases and pentose-1-phosphate. The chain is Purine nucleoside phosphorylase DeoD-type from Escherichia coli O81 (strain ED1a).